The sequence spans 172 residues: Melanocortin-2 receptor accessory protein (172 aa).

The chain crosses the membrane as a helical span at residues 38–58; sequence IVIAFWVSLAAFVVLLFLILL. Disordered stretches follow at residues 105–136 and 151–172; these read QAQA…LGGF and GPLV…QLQS.

This sequence belongs to the MRAP family. Homodimer and heterodimer. Forms antiparallel homodimers and heterodimers with MRAP2. Interacts with MC1R, MC2R, MC3R, MC4R and MC5R. As to expression, expressed in adrenal cortex, testis, breast, thyroid, lymph node, ovary and fat. Expressed in adipose tissues.

It localises to the cell membrane. It is found in the endoplasmic reticulum membrane. Modulator of melanocortin receptors (MC1R, MC2R, MC3R, MC4R and MC5R). Acts by increasing ligand-sensitivity of melanocortin receptors and enhancing generation of cAMP by the receptors. Required both for MC2R trafficking to the cell surface of adrenal cells and for signaling in response to corticotropin (ACTH). May be involved in the intracellular trafficking pathways in adipocyte cells. The protein is Melanocortin-2 receptor accessory protein (MRAP) of Homo sapiens (Human).